The following is a 276-amino-acid chain: Protein PXR1 (276 aa).

Residues 1-23 (MGLAGTKIKQRFGNDPRNTNWSN) are disordered. Residues 25–71 (TSRFGHQYLAKMGWQQGSGLGLVSHALTTHVKVSIKDDNLGLGAKLH) form the G-patch domain. Over residues 152–172 (DDGKKSRKRKADESETKEDKK) the composition is skewed to basic and acidic residues. A disordered region spans residues 152 to 261 (DDGKKSRKRK…SKWIKQKRAS (110 aa)). Basic residues predominate over residues 173–218 (TLKKHKKEKKDKKEKKEKKKKKEKKDKKDKKDKKNKKDKKDKKDKK). The span at 219 to 228 (DKKDKIRTGS) shows a compositional bias: basic and acidic residues. The segment covering 229–239 (DETLVSKESSA) has biased composition (polar residues).

The protein belongs to the PINX1 family.

The protein resides in the nucleus. The protein localises to the nucleolus. In terms of biological role, involved in rRNA-processing at A0, A1 and A2 sites and negatively regulates telomerase. The sequence is that of Protein PXR1 (PXR1) from Candida albicans (strain SC5314 / ATCC MYA-2876) (Yeast).